The following is a 442-amino-acid chain: Tryptophan synthase beta chain 2 (442 aa).

Lys110 is subject to N6-(pyridoxal phosphate)lysine.

This sequence belongs to the TrpB family. Tetramer of two alpha and two beta chains. The cofactor is pyridoxal 5'-phosphate.

It catalyses the reaction (1S,2R)-1-C-(indol-3-yl)glycerol 3-phosphate + L-serine = D-glyceraldehyde 3-phosphate + L-tryptophan + H2O. It participates in amino-acid biosynthesis; L-tryptophan biosynthesis; L-tryptophan from chorismate: step 5/5. The beta subunit is responsible for the synthesis of L-tryptophan from indole and L-serine. This is Tryptophan synthase beta chain 2 from Thermococcus kodakarensis (strain ATCC BAA-918 / JCM 12380 / KOD1) (Pyrococcus kodakaraensis (strain KOD1)).